Here is a 438-residue protein sequence, read N- to C-terminus: UDP-N-acetylmuramoylalanine--D-glutamate ligase (438 aa).

Residue 112–118 (GSNGKST) coordinates ATP.

It belongs to the MurCDEF family.

Its subcellular location is the cytoplasm. It catalyses the reaction UDP-N-acetyl-alpha-D-muramoyl-L-alanine + D-glutamate + ATP = UDP-N-acetyl-alpha-D-muramoyl-L-alanyl-D-glutamate + ADP + phosphate + H(+). The protein operates within cell wall biogenesis; peptidoglycan biosynthesis. Cell wall formation. Catalyzes the addition of glutamate to the nucleotide precursor UDP-N-acetylmuramoyl-L-alanine (UMA). In Shigella boydii serotype 4 (strain Sb227), this protein is UDP-N-acetylmuramoylalanine--D-glutamate ligase.